The sequence spans 106 residues: Large ribosomal subunit protein P1 (106 aa).

The disordered stretch occupies residues 69-106; the sequence is AAAAAPAEEAKEEAKEEEEEEEEVKEEEAIEGLGALFG. The segment covering 83 to 98 has biased composition (acidic residues); it reads KEEEEEEEEVKEEEAI.

It belongs to the eukaryotic ribosomal protein P1/P2 family. In terms of assembly, part of the 50S ribosomal subunit. Homodimer, it forms part of the ribosomal stalk which helps the ribosome interact with GTP-bound translation factors. Forms a heptameric uL10/P0(P1)2(P1)2(P1)2 complex, where uL10/P0 forms an elongated spine to which the P1 dimers bind in a sequential fashion.

Functionally, forms part of the ribosomal stalk, playing a central role in the interaction of the ribosome with GTP-bound translation factors. The protein is Large ribosomal subunit protein P1 of Archaeoglobus fulgidus (strain ATCC 49558 / DSM 4304 / JCM 9628 / NBRC 100126 / VC-16).